A 195-amino-acid chain; its full sequence is Pyridoxal 5'-phosphate synthase subunit PdxT (195 aa).

An L-glutamine-binding site is contributed by 46-48 (GES). Cysteine 78 functions as the Nucleophile in the catalytic mechanism. L-glutamine contacts are provided by residues arginine 107 and 136-137 (IR). Active-site charge relay system residues include histidine 173 and glutamate 175.

It belongs to the glutaminase PdxT/SNO family. In terms of assembly, in the presence of PdxS, forms a dodecamer of heterodimers. Only shows activity in the heterodimer.

It catalyses the reaction aldehydo-D-ribose 5-phosphate + D-glyceraldehyde 3-phosphate + L-glutamine = pyridoxal 5'-phosphate + L-glutamate + phosphate + 3 H2O + H(+). The enzyme catalyses L-glutamine + H2O = L-glutamate + NH4(+). The protein operates within cofactor biosynthesis; pyridoxal 5'-phosphate biosynthesis. Functionally, catalyzes the hydrolysis of glutamine to glutamate and ammonia as part of the biosynthesis of pyridoxal 5'-phosphate. The resulting ammonia molecule is channeled to the active site of PdxS. The chain is Pyridoxal 5'-phosphate synthase subunit PdxT from Dehalococcoides mccartyi (strain CBDB1).